A 150-amino-acid polypeptide reads, in one-letter code: UPF0178 protein PSEEN5341 (150 aa).

The protein belongs to the UPF0178 family.

The protein is UPF0178 protein PSEEN5341 of Pseudomonas entomophila (strain L48).